Consider the following 314-residue polypeptide: Probable 5-dehydro-4-deoxyglucarate dehydratase (314 aa).

It belongs to the DapA family.

The enzyme catalyses 5-dehydro-4-deoxy-D-glucarate + H(+) = 2,5-dioxopentanoate + CO2 + H2O. Its pathway is carbohydrate acid metabolism; D-glucarate degradation; 2,5-dioxopentanoate from D-glucarate: step 2/2. The protein is Probable 5-dehydro-4-deoxyglucarate dehydratase of Bradyrhizobium diazoefficiens (strain JCM 10833 / BCRC 13528 / IAM 13628 / NBRC 14792 / USDA 110).